A 453-amino-acid polypeptide reads, in one-letter code: Trigger factor (453 aa).

A PPIase FKBP-type domain is found at 171–256; that stretch reads GDRVTINFKG…ATSIEAPQDI (86 aa).

Belongs to the FKBP-type PPIase family. Tig subfamily.

Its subcellular location is the cytoplasm. It catalyses the reaction [protein]-peptidylproline (omega=180) = [protein]-peptidylproline (omega=0). Its function is as follows. Involved in protein export. Acts as a chaperone by maintaining the newly synthesized protein in an open conformation. Functions as a peptidyl-prolyl cis-trans isomerase. The sequence is that of Trigger factor from Bradyrhizobium diazoefficiens (strain JCM 10833 / BCRC 13528 / IAM 13628 / NBRC 14792 / USDA 110).